Reading from the N-terminus, the 372-residue chain is Anhydro-N-acetylmuramic acid kinase (372 aa).

G13–D20 contacts ATP.

Belongs to the anhydro-N-acetylmuramic acid kinase family.

The catalysed reaction is 1,6-anhydro-N-acetyl-beta-muramate + ATP + H2O = N-acetyl-D-muramate 6-phosphate + ADP + H(+). It functions in the pathway amino-sugar metabolism; 1,6-anhydro-N-acetylmuramate degradation. It participates in cell wall biogenesis; peptidoglycan recycling. Its function is as follows. Catalyzes the specific phosphorylation of 1,6-anhydro-N-acetylmuramic acid (anhMurNAc) with the simultaneous cleavage of the 1,6-anhydro ring, generating MurNAc-6-P. Is required for the utilization of anhMurNAc either imported from the medium or derived from its own cell wall murein, and thus plays a role in cell wall recycling. This Rhizobium johnstonii (strain DSM 114642 / LMG 32736 / 3841) (Rhizobium leguminosarum bv. viciae) protein is Anhydro-N-acetylmuramic acid kinase.